Here is a 515-residue protein sequence, read N- to C-terminus: Cytidine and dCMP deaminase domain-containing protein 1 (515 aa).

2 stretches are compositionally biased toward polar residues: residues 1-11 (MKEAGQMQNLE) and 18-27 (SVSTQTGSMT). Disordered regions lie at residues 1-27 (MKEA…GSMT) and 56-83 (RQKS…STDK). Basic and acidic residues predominate over residues 60–83 (QKNEEGKHGPLGDNEEMTRVSTDK). The region spanning 71-169 (GDNEEMTRVS…SLLTEASSSE (99 aa)) is the CMP/dCMP-type deaminase 1 domain. Positions 110, 135, and 138 each coordinate Zn(2+). Positions 272–284 (NLRQNMKDLILLL) match the Nuclear export signal motif. The region spanning 318 to 483 (EIARHCMVQA…LNPSGAYGLE (166 aa)) is the CMP/dCMP-type deaminase 2 domain. Residue histidine 399 coordinates Zn(2+). Glutamate 401 acts as the Proton donor in catalysis. Zn(2+) contacts are provided by cysteine 427 and cysteine 430. The Bipartite nuclear localization signal signature appears at 489–511 (RRENGVLRPVPQKEEQHQDKKLC). Residues 494 to 515 (VLRPVPQKEEQHQDKKLCLGIH) form a disordered region.

Belongs to the cytidine and deoxycytidylate deaminase family. Zn(2+) serves as cofactor.

The protein resides in the cytoplasm. Its subcellular location is the nucleus. The enzyme catalyses 2'-deoxycytidine + H2O + H(+) = 2'-deoxyuridine + NH4(+). It carries out the reaction cytidine + H2O + H(+) = uridine + NH4(+). In terms of biological role, catalyzes the deamination of cytidine and deoxycytidine into uridine and deoxyuridine, respectively. May play an important role in testicular development and spermatogenesis. This Pongo abelii (Sumatran orangutan) protein is Cytidine and dCMP deaminase domain-containing protein 1 (CDADC1).